A 78-amino-acid polypeptide reads, in one-letter code: Probable [Fe-S]-dependent transcriptional repressor (78 aa).

Positions 56, 61, 64, and 70 each coordinate iron-sulfur cluster.

This sequence belongs to the FeoC family.

Functionally, may function as a transcriptional regulator that controls feoABC expression. The chain is Probable [Fe-S]-dependent transcriptional repressor from Escherichia coli O9:H4 (strain HS).